The primary structure comprises 367 residues: 2-aminoethylphosphonate--pyruvate transaminase (367 aa).

Lys-194 is subject to N6-(pyridoxal phosphate)lysine.

Belongs to the class-V pyridoxal-phosphate-dependent aminotransferase family. PhnW subfamily. As to quaternary structure, homodimer. Pyridoxal 5'-phosphate serves as cofactor.

It carries out the reaction (2-aminoethyl)phosphonate + pyruvate = phosphonoacetaldehyde + L-alanine. In terms of biological role, involved in phosphonate degradation. This chain is 2-aminoethylphosphonate--pyruvate transaminase, found in Klebsiella pneumoniae subsp. pneumoniae (strain ATCC 700721 / MGH 78578).